A 565-amino-acid polypeptide reads, in one-letter code: Periplasmic trehalase (565 aa).

The N-terminal stretch at 1–30 (MKSPAPSRPQKMALIPACIFLCFAALSVQA) is a signal peptide. Residues arginine 152, 159 to 160 (WD), asparagine 196, 205 to 207 (RSQ), 277 to 279 (RPE), and glycine 310 contribute to the substrate site. Active-site proton donor/acceptor residues include aspartate 312 and glutamate 496. Residue glutamate 511 participates in substrate binding. The tract at residues 539 to 565 (CDNVPATRPLSESTTQPVKQKEAEPTP) is disordered.

The protein belongs to the glycosyl hydrolase 37 family. In terms of assembly, monomer.

The protein localises to the periplasm. The catalysed reaction is alpha,alpha-trehalose + H2O = alpha-D-glucose + beta-D-glucose. Its function is as follows. Provides the cells with the ability to utilize trehalose at high osmolarity by splitting it into glucose molecules that can subsequently be taken up by the phosphotransferase-mediated uptake system. This Escherichia coli O17:K52:H18 (strain UMN026 / ExPEC) protein is Periplasmic trehalase.